Reading from the N-terminus, the 82-residue chain is Sodium channel neurotoxin MeuNaTxalpha-3 (82 aa).

The N-terminal stretch at Leu-1–Ser-8 is a signal peptide. Residues Arg-10 to His-80 form the LCN-type CS-alpha/beta domain. Disulfide bonds link Cys-20/Cys-79, Cys-24/Cys-52, Cys-38/Cys-62, and Cys-42/Cys-64.

Expressed by the venom gland.

Its subcellular location is the secreted. Its function is as follows. Alpha toxins bind voltage-independently at site-3 of sodium channels (Nav) and inhibit the inactivation of the activated channels, thereby blocking neuronal transmission. The protein is Sodium channel neurotoxin MeuNaTxalpha-3 of Mesobuthus eupeus (Lesser Asian scorpion).